Consider the following 139-residue polypeptide: S-protein homolog 14 (139 aa).

The first 20 residues, 1–20 (MNRFIIFMFVVVTYFGLNVA), serve as a signal peptide directing secretion. N-linked (GlcNAc...) asparagine glycosylation occurs at N136.

This sequence belongs to the plant self-incompatibility (S1) protein family.

It localises to the secreted. This Arabidopsis thaliana (Mouse-ear cress) protein is S-protein homolog 14.